The following is a 283-amino-acid chain: Probable replication-associated protein repA1 (283 aa).

The protein belongs to the IncFII RepA family.

Its function is as follows. This protein is essential for plasmid replication; it is involved in copy control functions. The polypeptide is Probable replication-associated protein repA1 (repA1) (Buchnera aphidicola subsp. Schizaphis graminum (strain Sg)).